The following is a 96-amino-acid chain: Glycine-rich protein DC7.1 (96 aa).

A signal peptide spans 1-25 (MGSKIFLLLGLSIAFALLISSEVAA). Residues 29-66 (SETTTEGASLDGGHHGGGGGGHYSGGGGHGGSHHGGGG) form a disordered region. 2 repeat units span residues 42 to 50 (HHGGGGGGH) and 61 to 67 (HHGGGGH). Residues 42–67 (HHGGGGGGHYSGGGGHGGSHHGGGGH) are 2 approximate repeats of H-H-G(4,6)-H. Residues 43 to 66 (HGGGGGGHYSGGGGHGGSHHGGGG) show a composition bias toward gly residues.

The protein belongs to the GRP family.

In terms of biological role, may be connected with the initiation of embryogenesis or with the metabolic changes produced by the removal of auxins. The polypeptide is Glycine-rich protein DC7.1 (Daucus carota (Wild carrot)).